Consider the following 531-residue polypeptide: Putative aldehyde dehydrogenase family 7 member A1 homolog (531 aa).

264–269 (GSSEIG) contacts NAD(+). Residue Glu286 is the Proton acceptor of the active site. The Nucleophile role is filled by Cys320.

Belongs to the aldehyde dehydrogenase family. In terms of assembly, homotetramer.

It catalyses the reaction an aldehyde + NAD(+) + H2O = a carboxylate + NADH + 2 H(+). This is Putative aldehyde dehydrogenase family 7 member A1 homolog (alh-9) from Caenorhabditis elegans.